Reading from the N-terminus, the 933-residue chain is Progesterone receptor (933 aa).

Positions 1 to 48 (MTELKAKGPRAPHVAGGPPSPEVGSPLLCRPAAGPFEGSQTSDTLPEV) are disordered. The interval 1–164 (MTELKAKGPR…PATQRVLSPL (164 aa)) is AF3; mediates transcriptional activation. Positions 1–566 (MTELKAKGPR…YSFESLPQKI (566 aa)) are modulating, Pro-Rich. A Phosphoserine modification is found at Ser-20. The LXXL motif 1 motif lies at 55-59 (LDGLL). The segment at 66–255 (GQDLPDEKTQ…GAAAGGGAAA (190 aa)) is disordered. Ser-81 bears the Phosphoserine mark. The LXXL motif 2 signature appears at 115 to 119 (LDTLL). Phosphoserine is present on residues Ser-130 and Ser-162. The interval 165–305 (MSRSGGKTGD…LATTMMDFIH (141 aa)) is mediates transcriptional transrepression. The Nuclear localization signal signature appears at 183-187 (KVLPR). 2 positions are modified to phosphoserine: Ser-190 and Ser-213. Ser-294 is modified (phosphoserine; by MAPK1). The tract at residues 331–378 (GGAGAASAFAPPQSSPSASSTPVAVGDFPDCAYPPDAEPKDNAYPLYG) is disordered. Positions 335 to 350 (AASAFAPPQSSPSASS) are enriched in low complexity. Ser-345 is subject to Phosphoserine; by MAPK. Lys-388 is covalently cross-linked (Glycyl lysine isopeptide (Lys-Gly) (interchain with G-Cter in SUMO); alternate). A Glycyl lysine isopeptide (Lys-Gly) (interchain with G-Cter in ubiquitin); alternate cross-link involves residue Lys-388. Ser-400 carries the phosphoserine; by CDK2 modification. The segment at 415 to 454 (PDYPLGPPPQLPPRAPPSRPGEAAVTAAPASASVSSASSP) is disordered. Over residues 418–433 (PLGPPPQLPPRAPPSR) the composition is skewed to pro residues. A compositionally biased stretch (low complexity) spans 437–454 (AAVTAAPASASVSSASSP). Positions 456-546 (STLECILYKA…VYPPYLNYLR (91 aa)) are AF1; mediates transcriptional activation. Residue Lys-531 forms a Glycyl lysine isopeptide (Lys-Gly) (interchain with G-Cter in SUMO) linkage. 2 NR C4-type zinc fingers span residues 567–587 (CLIC…CGSC) and 603–627 (CAGR…LRKC). A DNA-binding region (nuclear receptor) is located at residues 567–639 (CLICGDEASG…AGMVLGGRKF (73 aa)). Ser-676 carries the post-translational modification Phosphoserine. Residues 679 to 913 (QDIQLIPPLI…EFPEMMSEVI (235 aa)) form the NR LBD domain. The AF2; mediates transcriptional activation stretch occupies residues 687-933 (LIKLLMSIEP…MVKPLLFHKK (247 aa)).

It belongs to the nuclear hormone receptor family. Interacts with SMARD1 and UNC45A. Interacts with CUEDC2; the interaction promotes ubiquitination, decreases sumoylation, and represses transcriptional activity. Interacts with PIAS3; the interaction promotes sumoylation of PR in a hormone-dependent manner, inhibits DNA-binding, and alters nuclear export. Interacts with SP1; the interaction requires ligand-induced phosphorylation on Ser-345 by ERK1/2-MAPK. Interacts with PRMT2. Interacts with NCOA2 and NCOA1. Interacts with KLF9. Interacts with GTF2B. Post-translationally, phosphorylated on multiple serine sites. Several of these sites are hormone-dependent. Phosphorylation on Ser-294 is highly hormone-dependent and modulates ubiquitination and sumoylation on Lys-388. Phosphorylation on Ser-345 also requires induction by hormone. Basal phosphorylation on Ser-81, Ser-162, Ser-190 and Ser-400 is increased in response to progesterone and can be phosphorylated in vitro by the CDK2-A1 complex. Increased levels of phosphorylation on Ser-400 also in the presence of EGF, heregulin, IGF, PMA and FBS. Phosphorylation at this site by CDK2 is ligand-independent, and increases nuclear translocation and transcriptional activity. Phosphorylation at Ser-162 and Ser-294, but not at Ser-190, is impaired during the G(2)/M phase of the cell cycle. Phosphorylation on Ser-345 by ERK1/2 MAPK is required for interaction with SP1. In terms of processing, sumoylation is hormone-dependent and represses transcriptional activity. Sumoylation on all three sites is enhanced by PIAS3. Desumoylated by SENP1. Sumoylation on Lys-388, the main site of sumoylation, is repressed by ubiquitination on the same site, and modulated by phosphorylation at Ser-294. Ubiquitination is hormone-dependent and represses sumoylation on the same site. Promoted by MAPK-mediated phosphorylation on Ser-294. Post-translationally, palmitoylated by ZDHHC7 and ZDHHC21. Palmitoylation is required for plasma membrane targeting and for rapid intracellular signaling via ERK and AKT kinases and cAMP generation.

Its subcellular location is the nucleus. The protein resides in the cytoplasm. The steroid hormones and their receptors are involved in the regulation of eukaryotic gene expression and affect cellular proliferation and differentiation in target tissues. Transcriptional activator of several progesteron-dependent promoters in a variety of cell types. Involved in activation of SRC-dependent MAPK signaling on hormone stimulation. This Trachypithecus obscurus (Dusky leaf-monkey) protein is Progesterone receptor (PGR).